The chain runs to 557 residues: Dicarboxylate transporter 1, chloroplastic (557 aa).

The N-terminal 69 residues, M1–V69, are a transit peptide targeting the chloroplast. 12 helical membrane passes run A90–V110, L122–V142, F158–F178, A229–G249, L256–L276, A305–Y325, I355–V375, D376–W396, W411–F431, F438–F458, A477–A497, and Y531–W551.

The protein belongs to the SLC13A/DASS transporter (TC 2.A.47) family. DIT1 subfamily. Expressed in roots, rosette and cauline leaves, stems, flowers and siliques.

It is found in the plastid. Its subcellular location is the chloroplast inner membrane. Functionally, 2-oxoglutarate/malate translocator involved with DIT2-1 in primary ammonia assimilation and in the re-assimilation of ammonia generated by the photorespiratory pathway. Imports 2-oxoglutarate into plastids as precursor for ammonia assimilation. 2-oxoglutarate is converted to glutamate, the end product of ammonia assimilation, which is exported to the cytosol by DIT2-1. The chain is Dicarboxylate transporter 1, chloroplastic (DIT1) from Arabidopsis thaliana (Mouse-ear cress).